A 230-amino-acid polypeptide reads, in one-letter code: MEGLTDRQLEVLRFIASQIEDHGYPPTIREIGEALDIRSTNGVNDHLKALERKGYLSRDPVKSRALIPTSAAREALGGGGGDAGSNVVPLVRGPARPGSRMIEIPIVGRVAAGMPILAQERVEDTVQVDAFLLGTNKKVYGLRVQGDSMIGDGILPGDYVFVKKQLNADDGEIVVAMIDDEATVKRVYFEGDRVRFQPSNPRMAPIYVRHSDFRSTMILGVVVGVYRKLT.

Positions 28-48 (IREIGEALDIRSTNGVNDHLK) form a DNA-binding region, H-T-H motif. Catalysis depends on for autocatalytic cleavage activity residues Ser-148 and Lys-185.

It belongs to the peptidase S24 family. Homodimer.

The enzyme catalyses Hydrolysis of Ala-|-Gly bond in repressor LexA.. Its function is as follows. Represses a number of genes involved in the response to DNA damage (SOS response), including recA and lexA. In the presence of single-stranded DNA, RecA interacts with LexA causing an autocatalytic cleavage which disrupts the DNA-binding part of LexA, leading to derepression of the SOS regulon and eventually DNA repair. In Anaeromyxobacter sp. (strain K), this protein is LexA repressor.